The primary structure comprises 259 residues: Phosphatidylglycerol--prolipoprotein diacylglyceryl transferase (259 aa).

4 helical membrane passes run 16–36 (FAISWYSLSYVIGILLGWFYA), 55–75 (FITYAVIGIIVGGRLGFVLLY), 92–112 (QGGMSFHGGALGVIIAAYLFC), and 117–137 (VNFLSLTDIIATVVPIGLFLG). Arg-138 is an a 1,2-diacyl-sn-glycero-3-phospho-(1'-sn-glycerol) binding site. The next 3 helical transmembrane spans lie at 172-192 (QLYEAFFEGLVLFCILAYATF), 201-221 (ALNLGLFLTFYALFRITIEIF), and 228-248 (IGFILDSLTMGQILSIPMLIL).

It belongs to the Lgt family.

It is found in the cell inner membrane. It catalyses the reaction L-cysteinyl-[prolipoprotein] + a 1,2-diacyl-sn-glycero-3-phospho-(1'-sn-glycerol) = an S-1,2-diacyl-sn-glyceryl-L-cysteinyl-[prolipoprotein] + sn-glycerol 1-phosphate + H(+). Its pathway is protein modification; lipoprotein biosynthesis (diacylglyceryl transfer). Its function is as follows. Catalyzes the transfer of the diacylglyceryl group from phosphatidylglycerol to the sulfhydryl group of the N-terminal cysteine of a prolipoprotein, the first step in the formation of mature lipoproteins. This chain is Phosphatidylglycerol--prolipoprotein diacylglyceryl transferase, found in Rickettsia canadensis (strain McKiel).